Here is a 324-residue protein sequence, read N- to C-terminus: Antihemorrhagic factor cMSF (324 aa).

The signal sequence occupies residues 1–19 (MHFLVALVLLGQIIGSTLS). 2 Cystatin fetuin-A-type domains span residues 22-130 (VRGD…VKCH) and 141-254 (RNCL…SDCV). The Cell attachment site motif lies at 23-25 (RGD). 7 disulfide bridges follow: cysteine 28/cysteine 315, cysteine 85/cysteine 96, cysteine 110/cysteine 129, cysteine 143/cysteine 146, cysteine 205/cysteine 217, cysteine 230/cysteine 253, and cysteine 287/cysteine 291. A glycan (N-linked (GlcNAc...) asparagine) is linked at asparagine 204. N-linked (GlcNAc...) asparagine glycosylation occurs at asparagine 282.

In terms of assembly, homodimer. As to expression, expressed by the liver.

The protein resides in the secreted. In terms of biological role, suppress hemorrhage induced by metalloproteinases from the same venom (brevilysin-H3, -H4, -H6) and from habu venom (metalloproteinases HR1A and HR1B). The non-hemorrhagic brevilysin-L4 is not inhibited by cMSF. Does not inhibit serine and cysteine proteases such as trypsin, chymotrypsin, thermolysin, and papain. The inhibition may occur by formation of a non-covalent complex between this protein and the proteinases at their metalloproteinase domains. The protein is Antihemorrhagic factor cMSF of Gloydius brevicauda (Korean slamosa snake).